Consider the following 449-residue polypeptide: Asparagine--tRNA ligase (449 aa).

It belongs to the class-II aminoacyl-tRNA synthetase family. In terms of assembly, homodimer.

Its subcellular location is the cytoplasm. The catalysed reaction is tRNA(Asn) + L-asparagine + ATP = L-asparaginyl-tRNA(Asn) + AMP + diphosphate + H(+). This is Asparagine--tRNA ligase from Mesomycoplasma hyopneumoniae (strain J / ATCC 25934 / NCTC 10110) (Mycoplasma hyopneumoniae).